Here is a 272-residue protein sequence, read N- to C-terminus: Ribosomal RNA small subunit methyltransferase A (272 aa).

Residues His10, Leu12, Gly37, Glu57, Asp82, and Asn98 each contribute to the S-adenosyl-L-methionine site.

It belongs to the class I-like SAM-binding methyltransferase superfamily. rRNA adenine N(6)-methyltransferase family. RsmA subfamily.

The protein localises to the cytoplasm. It carries out the reaction adenosine(1518)/adenosine(1519) in 16S rRNA + 4 S-adenosyl-L-methionine = N(6)-dimethyladenosine(1518)/N(6)-dimethyladenosine(1519) in 16S rRNA + 4 S-adenosyl-L-homocysteine + 4 H(+). In terms of biological role, specifically dimethylates two adjacent adenosines (A1518 and A1519) in the loop of a conserved hairpin near the 3'-end of 16S rRNA in the 30S particle. May play a critical role in biogenesis of 30S subunits. The sequence is that of Ribosomal RNA small subunit methyltransferase A from Gloeobacter violaceus (strain ATCC 29082 / PCC 7421).